The sequence spans 476 residues: MKFNIAKKGGVVAQLVFEEKIEGGYLNHLKEKELFSGKAEDVYYTLDSNLKAQLFIGLGKEEKIDLEVLRKTFFKAASELLKNKVEEVELNIPKLNNLCNYKTAEAIAEGMLHATYKYDKFKSDRKEQTEITVNYNPEKGKEDRAEKGINEAVKLMEAVFLTRDLVNQPANVIYPETLAKIAKEKLEAKGVKVTVHGKKEIEALKMEAFLNVARASTKEPKLIVMEYYNNPGSNEKIALVGKGLTYDSGGYAIKPATSMVDMFTDMGGSGTVIGAMHALADLKAKVNVVAVVASCENMISGDGYRNGDIIGSMSGKTIEIINTDAEGRLTLADAVYYATNNLGATKLIDLATLTGACVSALGEQVSGAVTNNDEFFSELVKANERAGEIVWRMPTIEYYKKMNESKVADLKNSGGKLGGMMTAGLFVGSFLAKEDIPWIHIDIAGTAYITEKFGYLKENATGTLVKSLYYMLSKEA.

Lys-242 and Asp-247 together coordinate Mn(2+). Lys-254 is an active-site residue. Mn(2+)-binding residues include Asp-265, Asp-324, and Glu-326. Arg-328 is an active-site residue.

Belongs to the peptidase M17 family. The cofactor is Mn(2+).

The protein resides in the cytoplasm. The catalysed reaction is Release of an N-terminal amino acid, Xaa-|-Yaa-, in which Xaa is preferably Leu, but may be other amino acids including Pro although not Arg or Lys, and Yaa may be Pro. Amino acid amides and methyl esters are also readily hydrolyzed, but rates on arylamides are exceedingly low.. It catalyses the reaction Release of an N-terminal amino acid, preferentially leucine, but not glutamic or aspartic acids.. In terms of biological role, presumably involved in the processing and regular turnover of intracellular proteins. Catalyzes the removal of unsubstituted N-terminal amino acids from various peptides. This is Probable cytosol aminopeptidase from Treponema denticola (strain ATCC 35405 / DSM 14222 / CIP 103919 / JCM 8153 / KCTC 15104).